Here is an 874-residue protein sequence, read N- to C-terminus: Alanine--tRNA ligase (874 aa).

4 residues coordinate Zn(2+): histidine 562, histidine 566, cysteine 665, and histidine 669.

Belongs to the class-II aminoacyl-tRNA synthetase family. Zn(2+) serves as cofactor.

Its subcellular location is the cytoplasm. It carries out the reaction tRNA(Ala) + L-alanine + ATP = L-alanyl-tRNA(Ala) + AMP + diphosphate. Functionally, catalyzes the attachment of alanine to tRNA(Ala) in a two-step reaction: alanine is first activated by ATP to form Ala-AMP and then transferred to the acceptor end of tRNA(Ala). Also edits incorrectly charged Ser-tRNA(Ala) and Gly-tRNA(Ala) via its editing domain. The polypeptide is Alanine--tRNA ligase (Pseudomonas putida (strain ATCC 700007 / DSM 6899 / JCM 31910 / BCRC 17059 / LMG 24140 / F1)).